The sequence spans 101 residues: Urease subunit beta (101 aa).

This sequence belongs to the urease beta subunit family. In terms of assembly, heterotrimer of UreA (gamma), UreB (beta) and UreC (alpha) subunits. Three heterotrimers associate to form the active enzyme.

The protein resides in the cytoplasm. It carries out the reaction urea + 2 H2O + H(+) = hydrogencarbonate + 2 NH4(+). Its pathway is nitrogen metabolism; urea degradation; CO(2) and NH(3) from urea (urease route): step 1/1. This is Urease subunit beta from Nostoc punctiforme (strain ATCC 29133 / PCC 73102).